The primary structure comprises 411 residues: Argininosuccinate synthase (411 aa).

Residues 11 to 19 (AYSGGLDTS) and Ala-37 each bind ATP. Positions 88 and 93 each coordinate L-citrulline. 116 to 124 (SHGATGKGN) is a binding site for ATP. L-aspartate contacts are provided by Thr-120, Asn-124, and Asp-125. Asn-124 contributes to the L-citrulline binding site. The L-citrulline site is built by Arg-128, Ser-181, Ser-190, Glu-271, and Tyr-283.

This sequence belongs to the argininosuccinate synthase family. In terms of assembly, homotetramer.

Its subcellular location is the cytoplasm. It is found in the cytosol. The enzyme catalyses L-citrulline + L-aspartate + ATP = 2-(N(omega)-L-arginino)succinate + AMP + diphosphate + H(+). It functions in the pathway amino-acid biosynthesis; L-arginine biosynthesis; L-arginine from L-ornithine and carbamoyl phosphate: step 2/3. It participates in nitrogen metabolism; urea cycle; (N(omega)-L-arginino)succinate from L-aspartate and L-citrulline: step 1/1. Its function is as follows. One of the enzymes of the urea cycle, the metabolic pathway transforming neurotoxic amonia produced by protein catabolism into inocuous urea in the liver of ureotelic animals. Catalyzes the formation of arginosuccinate from aspartate, citrulline and ATP and together with ASL it is responsible for the biosynthesis of arginine in most body tissues. This chain is Argininosuccinate synthase, found in Xenopus laevis (African clawed frog).